The primary structure comprises 203 residues: Translation initiation factor IF-3 (203 aa).

Residues 172 to 182 show a composition bias toward basic and acidic residues; it reads EAPKNEKKTKE. The tract at residues 172-203 is disordered; that stretch reads EAPKNEKKTKENNPPFNRINLMKGENHAKNED.

This sequence belongs to the IF-3 family. In terms of assembly, monomer.

The protein resides in the cytoplasm. Functionally, IF-3 binds to the 30S ribosomal subunit and shifts the equilibrium between 70S ribosomes and their 50S and 30S subunits in favor of the free subunits, thus enhancing the availability of 30S subunits on which protein synthesis initiation begins. In Helicobacter pylori (strain J99 / ATCC 700824) (Campylobacter pylori J99), this protein is Translation initiation factor IF-3.